Consider the following 263-residue polypeptide: Lens fiber major intrinsic protein (263 aa).

Topologically, residues 1-9 (MWELRSASF) are cytoplasmic. Residues 10–29 (WRAIFAEFFATLFYVFFGLG) form a helical membrane-spanning segment. At 30–41 (ASLRWAPGPLHV) the chain is on the extracellular side. Residues 42 to 59 (LQVALAFGLALATLVQAV) traverse the membrane as a helical segment. Residues 60–61 (GH) lie on the Cytoplasmic side of the membrane. Positions 62-77 (ISGAHVNPAVTFAFLV) form an intramembrane region, discontinuously helical. Positions 68–70 (NPA) match the NPA 1 motif. The Cytoplasmic portion of the chain corresponds to 78–82 (GSQMS). A helical transmembrane segment spans residues 83 to 106 (LLRAICYMAAQLLGAVAGAAVLYS). Over 107-127 (VTPAAVRGNLALNTLHPGVSL) the chain is Extracellular. Residues 128-148 (GQATTVEIFLTLQFVLCIFAT) traverse the membrane as a helical segment. Over 149 to 156 (YDERRNGR) the chain is Cytoplasmic. Residues 157 to 175 (LGSVALAVGFSLTLGHLFG) form a helical membrane-spanning segment. Residues 176-178 (MYY) are Extracellular-facing. Positions 179 to 193 (TGAGMNPARSFAPAI) form an intramembrane region, discontinuously helical. An NPA 2 motif is present at residues 184–186 (NPA). Over 194-200 (LTRNFTN) the chain is Extracellular. Residues 201-222 (HWVYWVGPIIGGGLASLLYDFL) traverse the membrane as a helical segment. At 223 to 263 (LFPRLKSVSERLSILKGARPSDSNGQPEGTGEPVELKTQAL) the chain is on the cytoplasmic side. An interaction with CALM region spans residues 227–237 (LKSVSERLSIL). Serine 235, serine 243, and serine 245 each carry phosphoserine. Residues 240–263 (ARPSDSNGQPEGTGEPVELKTQAL) are disordered. A Deamidated asparagine modification is found at asparagine 246.

The protein belongs to the MIP/aquaporin (TC 1.A.8) family. In terms of assembly, homotetramer; each monomer provides an independent water pore. Two homotetramers on opposing membranes can dimerize, forming a cell-cell junction. Interacts with CALM; the calcium-calmodulin/CALM complex interacts with the cytoplasmic domains of two aquaporins, leading to channel closure. Interacts with BFSP1 (via C-terminus); prevents calcium-dependent inhibition of the water channel activity. In terms of processing, subject to partial proteolytic cleavage in the eye lens core. Partial proteolysis promotes interactions between tetramers from adjoining membranes. Fatty acylated at Met-1 and Lys-238. The acyl modifications, in decreasing order of ion abundance, are: oleoyl (C18:1) &gt; palmitoyl (C16:0) &gt; stearoyl (C18:0) &gt; eicosenoyl (C20:1) &gt; dihomo-gamma-linolenoyl (C20:3) &gt; palmitoleoyl (C16:1) &gt; eicosadienoyl (C20:2).

The protein localises to the cell membrane. Its subcellular location is the cell junction. The enzyme catalyses H2O(in) = H2O(out). The water channel activity is inhibited by calcium through calmodulin/CALM. Functionally, aquaporins form homotetrameric transmembrane channels, with each monomer independently mediating water transport across the plasma membrane along its osmotic gradient. Specifically expressed in lens fiber cells, this aquaporin is crucial for maintaining lens water homeostasis and transparency. Beyond water permeability, it also acts as a cell-to-cell adhesion molecule, forming thin junctions between lens fiber cells that are essential for maintaining the ordered structure and transparency of the lens. In Oryctolagus cuniculus (Rabbit), this protein is Lens fiber major intrinsic protein.